The primary structure comprises 87 residues: UPF0250 protein KPN78578_06520 (87 aa).

It belongs to the UPF0250 family.

The sequence is that of UPF0250 protein KPN78578_06520 from Klebsiella pneumoniae subsp. pneumoniae (strain ATCC 700721 / MGH 78578).